The following is a 358-amino-acid chain: Fructose-bisphosphate aldolase 6, cytosolic (358 aa).

N-acetylserine is present on serine 2. Arginine 39 is a binding site for substrate. Cysteine 68 is subject to S-glutathionyl cysteine; transient. Cysteine 173 carries the post-translational modification S-glutathionyl cysteine; transient; alternate. Cysteine 173 bears the S-nitrosocysteine; transient; alternate mark. The Proton acceptor role is filled by glutamate 183. Lysine 225 acts as the Schiff-base intermediate with dihydroxyacetone-P in catalysis. Substrate-binding positions include 266–268 (SGG) and arginine 298. Phosphoserine is present on serine 350. Lysine 354 is subject to N6,N6,N6-trimethyllysine.

Belongs to the class I fructose-bisphosphate aldolase family. In terms of assembly, homotetramer. Interacts with TRX1 and TRX3. Interacts with GAPC1 and VDAC3. Post-translationally, S-glutathionylated at Cys-68 and Cys-173. S-nitrosylated at Cys-173. In terms of tissue distribution, expressed in roots, rosettes leaves, cauline leaves, stems and flowers.

It localises to the cytoplasm. The protein resides in the cytosol. It is found in the nucleus. The protein localises to the mitochondrion. It catalyses the reaction beta-D-fructose 1,6-bisphosphate = D-glyceraldehyde 3-phosphate + dihydroxyacetone phosphate. The protein operates within carbohydrate degradation; glycolysis; D-glyceraldehyde 3-phosphate and glycerone phosphate from D-glucose: step 4/4. With respect to regulation, total and irreversible inhibition by S-nitrosoglutathione (GSNO). Partial and reversible inhibition by oxidized glutathione (GSSG). Fructose-bisphosphate aldolase that plays a key role in glycolysis and gluconeogenesis. Associates with GAPC1 to the outer mitochondrial membrane, in a redox-dependent manner, leading to binding and bundling of actin. Actin binding and bundling occurs under oxidizing conditions and is reversible under reducing conditions. May be part of a redox-dependent retrograde signal transduction network for adaptation upon oxidative stress. This chain is Fructose-bisphosphate aldolase 6, cytosolic, found in Arabidopsis thaliana (Mouse-ear cress).